A 277-amino-acid polypeptide reads, in one-letter code: Thiazole synthase (277 aa).

The active-site Schiff-base intermediate with DXP is lysine 107. 1-deoxy-D-xylulose 5-phosphate-binding positions include glycine 168, 194–195 (AG), and 216–217 (AS).

It belongs to the ThiG family. Homotetramer. Forms heterodimers with either ThiH or ThiS.

The protein localises to the cytoplasm. It catalyses the reaction [ThiS sulfur-carrier protein]-C-terminal-Gly-aminoethanethioate + 2-iminoacetate + 1-deoxy-D-xylulose 5-phosphate = [ThiS sulfur-carrier protein]-C-terminal Gly-Gly + 2-[(2R,5Z)-2-carboxy-4-methylthiazol-5(2H)-ylidene]ethyl phosphate + 2 H2O + H(+). It functions in the pathway cofactor biosynthesis; thiamine diphosphate biosynthesis. In terms of biological role, catalyzes the rearrangement of 1-deoxy-D-xylulose 5-phosphate (DXP) to produce the thiazole phosphate moiety of thiamine. Sulfur is provided by the thiocarboxylate moiety of the carrier protein ThiS. In vitro, sulfur can be provided by H(2)S. The protein is Thiazole synthase of Cutibacterium acnes (strain DSM 16379 / KPA171202) (Propionibacterium acnes).